A 102-amino-acid polypeptide reads, in one-letter code: Large ribosomal subunit protein bL21 (102 aa).

The protein belongs to the bacterial ribosomal protein bL21 family. Part of the 50S ribosomal subunit. Contacts protein L20.

Functionally, this protein binds to 23S rRNA in the presence of protein L20. The sequence is that of Large ribosomal subunit protein bL21 from Geotalea daltonii (strain DSM 22248 / JCM 15807 / FRC-32) (Geobacter daltonii).